Reading from the N-terminus, the 557-residue chain is MGNTCRGSIGGKTFQGYTQPEDSSCSTNHNPSSGNSYSSSDNFSPTSNAQQNSNHKKEHSLSLVSPRKASMNRSGSNQAYYVMGHMTPNIRDLYTLGRKLGQGQFGTTYLCTENSTGAEYACKSISKRKLISKEDVEDVRREIQIMHHLSGHRNIVTIKGAYEDPLYVHIVMEICSGGELFDRIIQRGHYSERKAAELTKIIVGVVEACHSLGVMHRDLKPENFLLVNKDNDFSLKAIDFGLSVFFKPGQIFTDVVGSPYYVAPEVLLKHYGPEADVWTAGVILYILLSGVPPFWAETQQGIFDAVLKGHIDFDSDPWPLISESAKDLIRKMLCMQPSERLTAHEVLCHPWICENGVAPDRALDPAVLSRLKQFSAMNKLKKMALRVIAESLSEEEIAGLREMFKAMDTDSSGAITFDELKAGLRKYGSTLKDTEIRELMDAADVDNSGTIDYGEFIAATVHLNKLEREEHLMAAFQYFDKDGSGYITVDEVQQACIEHNMTDVYFEDIIREVDQDNDGRIDYGEFVAMMQKGNPCIGRRTMRNSLNLSMRDAPGAQ.

The segment at 1 to 72 (MGNTCRGSIG…LVSPRKASMN (72 aa)) is disordered. Glycine 2 is lipidated: N-myristoyl glycine. The segment covering 15-27 (QGYTQPEDSSCST) has biased composition (polar residues). Residues 28-48 (NHNPSSGNSYSSSDNFSPTSN) are compositionally biased toward low complexity. Residues 94 to 352 (YTLGRKLGQG…AHEVLCHPWI (259 aa)) enclose the Protein kinase domain. ATP is bound by residues 100–108 (LGQGQFGTT) and lysine 123. The active-site Proton acceptor is aspartate 218. Residues 358–388 (APDRALDPAVLSRLKQFSAMNKLKKMALRVI) are autoinhibitory domain. 4 EF-hand domains span residues 395 to 430 (EEIA…YGST), 431 to 466 (LKDT…LNKL), 467 to 502 (EREE…HNMT), and 506 to 536 (FEDI…GNPC). Ca(2+) is bound by residues aspartate 408, aspartate 410, serine 412, glutamate 419, aspartate 444, aspartate 446, serine 448, threonine 450, glutamate 455, aspartate 480, aspartate 482, serine 484, tyrosine 486, glutamate 491, aspartate 514, aspartate 516, aspartate 518, arginine 520, and glutamate 525.

The protein belongs to the protein kinase superfamily. Ser/Thr protein kinase family. CDPK subfamily.

The protein resides in the membrane. It catalyses the reaction L-seryl-[protein] + ATP = O-phospho-L-seryl-[protein] + ADP + H(+). The catalysed reaction is L-threonyl-[protein] + ATP = O-phospho-L-threonyl-[protein] + ADP + H(+). Its activity is regulated as follows. Activated by calcium. Autophosphorylation may play an important role in the regulation of the kinase activity. Regulates the production of reactive oxygen species (ROS) by NADPH oxidase. In Solanum tuberosum (Potato), this protein is Calcium-dependent protein kinase 4 (CPK4).